Reading from the N-terminus, the 541-residue chain is MSAKEVRFGTDARGRMLKGINTLADTVKITLGPKGRNVILDTSYGAPRITKDGVTVAREIELSDRFENVGAQMVKEVASRTNEEAGDGTTTATVLAQAIAKEGMKAVAAGMNPMDLKRGIDRAVAIVIAEIRSMSRPVGDSAEIAKVGALSANGEAAIGRQIADAMAKVGTAGVIKVENKGLETETEVVEGMQFDRGYLSPYFITHAQKMVVELDDCAILLHEGKLTSLASMVPLLEAVVQAEKQLLVVAEDVEGEALTTLVVNKLRGGLKVAAAKAPGFGDGRAAMLEDLAVLTGAHLISAELGTKLETVTLDMLGFAKKVVLTKDSTILIDSAGDKAAIASRIGQIRNQIEDTTSAYNKEKLQERLARLAGGVAVIRVGGATEIEVKERRDRVEDTLNATRAAVQEGVVPGGGAALIHAGKALAGLKGDNPDQDAGIKIIRRAIQAPLRQIADNAGIDGSVVAGKVIENDSATFGFDAQLETYGDMLQAGIIDPTKVVRIALEDAASIAGLLITTEVIIAHKPERGERMSQMDEMGGMM.

Residues Thr30–Pro33, Lys51, Asp87–Thr91, Gly414, and Asp495 contribute to the ATP site.

The protein belongs to the chaperonin (HSP60) family. As to quaternary structure, forms a cylinder of 14 subunits composed of two heptameric rings stacked back-to-back. Interacts with the co-chaperonin GroES.

Its subcellular location is the cytoplasm. The enzyme catalyses ATP + H2O + a folded polypeptide = ADP + phosphate + an unfolded polypeptide.. In terms of biological role, together with its co-chaperonin GroES, plays an essential role in assisting protein folding. The GroEL-GroES system forms a nano-cage that allows encapsulation of the non-native substrate proteins and provides a physical environment optimized to promote and accelerate protein folding. The sequence is that of Chaperonin GroEL 2 from Cereibacter sphaeroides (Rhodobacter sphaeroides).